Here is a 131-residue protein sequence, read N- to C-terminus: MGRDIIANIITSIRNADIDQKGRVKIVSTNITKNIVKILLREGFIENVRKHQESQKNFLVSTLRHRKTRKGNKINLKRISRPGLRIYSNYQQIPKILGGMGIVILSTSRGIITDREARLEKIGGEILCYIW.

It belongs to the universal ribosomal protein uS8 family. As to quaternary structure, part of the 30S ribosomal subunit.

It is found in the plastid. Its subcellular location is the chloroplast. In terms of biological role, one of the primary rRNA binding proteins, it binds directly to 16S rRNA central domain where it helps coordinate assembly of the platform of the 30S subunit. This chain is Small ribosomal subunit protein uS8c (rps8), found in Phalaenopsis aphrodite subsp. formosana (Moth orchid).